We begin with the raw amino-acid sequence, 90 residues long: Small ribosomal subunit protein uS15c (90 aa).

It belongs to the universal ribosomal protein uS15 family. In terms of assembly, part of the 30S ribosomal subunit.

Its subcellular location is the plastid. The protein localises to the chloroplast. This Liriodendron tulipifera (Tuliptree) protein is Small ribosomal subunit protein uS15c (rps15).